Here is a 148-residue protein sequence, read N- to C-terminus: Large ribosomal subunit protein uL13 (148 aa).

Belongs to the universal ribosomal protein uL13 family. Part of the 50S ribosomal subunit.

Its function is as follows. This protein is one of the early assembly proteins of the 50S ribosomal subunit, although it is not seen to bind rRNA by itself. It is important during the early stages of 50S assembly. The sequence is that of Large ribosomal subunit protein uL13 from Ureaplasma parvum serovar 3 (strain ATCC 27815 / 27 / NCTC 11736).